The primary structure comprises 365 residues: DNA replication and repair protein RecF (365 aa).

30–37 (GLNAQGKT) contacts ATP.

The protein belongs to the RecF family.

Its subcellular location is the cytoplasm. The RecF protein is involved in DNA metabolism; it is required for DNA replication and normal SOS inducibility. RecF binds preferentially to single-stranded, linear DNA. It also seems to bind ATP. This chain is DNA replication and repair protein RecF, found in Chlamydia trachomatis serovar A (strain ATCC VR-571B / DSM 19440 / HAR-13).